The chain runs to 1016 residues: Mastermind-like protein 1 (1016 aa).

The required for interaction with NOTCH proteins stretch occupies residues 1–123 (MVLPTCPMAE…NLDSATSPQN (123 aa)). Serine 45 carries the phosphoserine modification. 5 disordered regions span residues 65–184 (QAKA…LGLD), 263–487 (PDED…PSHV), 561–617 (KPKP…SQQQ), 658–681 (EKQQFQRHLTRPPPQYQDPTQGSF), and 796–953 (AYGQ…GGRA). Basic residues predominate over residues 67–76 (KAKRAGKHRQ). Basic and acidic residues predominate over residues 93–115 (DAADGPEHGRPATHLHDTVKRNL). A compositionally biased stretch (polar residues) spans 116 to 129 (DSATSPQNGDQQNG). Phosphoserine is present on serine 120. The segment covering 263-282 (PDEDMKDLFNEDFEEKKDPE) has biased composition (basic and acidic residues). Over residues 283-292 (SSGSATQTPL) the composition is skewed to polar residues. Residues serine 303 and serine 314 each carry the phosphoserine modification. A compositionally biased stretch (polar residues) spans 322 to 353 (AGQTFLGPSSAPVSTDSPSLGGSQTLFHTSGQ). Serine 360 bears the Phosphoserine mark. The segment covering 392-403 (ELSSAHQLQQIA) has biased composition (polar residues). Positions 413–426 (QNPQQATPAPAPGQ) are enriched in low complexity. Polar residues-rich tracts occupy residues 427-439 (MSTWQQTGPSHSS), 451-463 (SPSSYKQDFTNSK), 577-595 (QEQNPSSVPVQAQATSVGT), and 602-617 (VASSHNSSPYLSSQQQ). A compositionally biased stretch (low complexity) spans 801 to 810 (SLGSSGLSQQ). Lysine 822 carries the N6-acetyllysine modification. Positions 834 to 885 (GQNSSWQHQGMPNLSGQTPGNSNVSPFTAASSFHMQQQAHLKMSSPQFSQAV) are enriched in polar residues. Residue serine 1015 is modified to Phosphoserine.

This sequence belongs to the mastermind family. Interacts (via N-terminus) with NOTCH1, NOTCH2, NOTCH3 and NOTCH4 (via ankyrin repeat region). Interacts (via N-terminus) with p53 (via DNA-binding region). Forms a DNA-binding complex with Notch proteins and RBPSUH/RBP-J kappa/CBF1. Also binds CREBBP/CBP and CDK8. Forms a complex with PRAG1, NOTCH1 and MAML1, in a MAML1-dependent manner. In terms of tissue distribution, widely expressed with highest levels in heart, pancreas, peripheral blood leukocytes and spleen.

It is found in the nucleus speckle. In terms of biological role, acts as a transcriptional coactivator for NOTCH proteins. Has been shown to amplify NOTCH-induced transcription of HES1. Enhances phosphorylation and proteolytic turnover of the NOTCH intracellular domain in the nucleus through interaction with CDK8. Binds to CREBBP/CBP which promotes nucleosome acetylation at NOTCH enhancers and activates transcription. Induces phosphorylation and localization of CREBBP to nuclear foci. Plays a role in hematopoietic development by regulating NOTCH-mediated lymphoid cell fate decisions. This Homo sapiens (Human) protein is Mastermind-like protein 1.